Consider the following 469-residue polypeptide: GTPase Der (469 aa).

EngA-type G domains follow at residues 3 to 166 (PVIA…PEDE) and 177 to 350 (LRLA…ESAN). Residues 9–16 (GRPNVGKS), 56–60 (DTGGI), 118–121 (NKVD), 183–190 (GRPNVGKS), 230–234 (DTAGV), and 295–298 (NKWD) contribute to the GTP site. In terms of domain architecture, KH-like spans 351–435 (LKVSPAKLTQ…PVKIEFKTSE (85 aa)).

This sequence belongs to the TRAFAC class TrmE-Era-EngA-EngB-Septin-like GTPase superfamily. EngA (Der) GTPase family. As to quaternary structure, associates with the 50S ribosomal subunit.

Functionally, GTPase that plays an essential role in the late steps of ribosome biogenesis. The chain is GTPase Der from Acinetobacter baumannii (strain AB0057).